A 311-amino-acid chain; its full sequence is tRNA-cytidine(32) 2-sulfurtransferase (311 aa).

The PP-loop motif signature appears at serine 47 to serine 52. The [4Fe-4S] cluster site is built by cysteine 122, cysteine 125, and cysteine 213.

It belongs to the TtcA family. As to quaternary structure, homodimer. Requires Mg(2+) as cofactor. It depends on [4Fe-4S] cluster as a cofactor.

It is found in the cytoplasm. The catalysed reaction is cytidine(32) in tRNA + S-sulfanyl-L-cysteinyl-[cysteine desulfurase] + AH2 + ATP = 2-thiocytidine(32) in tRNA + L-cysteinyl-[cysteine desulfurase] + A + AMP + diphosphate + H(+). It functions in the pathway tRNA modification. In terms of biological role, catalyzes the ATP-dependent 2-thiolation of cytidine in position 32 of tRNA, to form 2-thiocytidine (s(2)C32). The sulfur atoms are provided by the cysteine/cysteine desulfurase (IscS) system. This is tRNA-cytidine(32) 2-sulfurtransferase from Escherichia coli O7:K1 (strain IAI39 / ExPEC).